The chain runs to 212 residues: Fibrillarin-like rRNA/tRNA 2'-O-methyltransferase (212 aa).

A disordered region spans residues 1–37 (MSEPNLPAGVERREIGGETRLATRGPPVYGEPTADGW). Residues 74-75 (TT), 90-91 (EF), 115-116 (DA), and 136-139 (DVAT) each bind S-adenosyl-L-methionine.

The protein belongs to the methyltransferase superfamily. Fibrillarin family. In terms of assembly, interacts with nop5. Component of box C/D small ribonucleoprotein (sRNP) particles that contain rpl7ae, FlpA and nop5, plus a guide RNA.

Involved in pre-rRNA and tRNA processing. Utilizes the methyl donor S-adenosyl-L-methionine to catalyze the site-specific 2'-hydroxyl methylation of ribose moieties in rRNA and tRNA. Site specificity is provided by a guide RNA that base pairs with the substrate. Methylation occurs at a characteristic distance from the sequence involved in base pairing with the guide RNA. In Halorubrum lacusprofundi (strain ATCC 49239 / DSM 5036 / JCM 8891 / ACAM 34), this protein is Fibrillarin-like rRNA/tRNA 2'-O-methyltransferase.